The chain runs to 350 residues: Anthranilate phosphoribosyltransferase (350 aa).

5-phospho-alpha-D-ribose 1-diphosphate is bound by residues Gly94, 97 to 98 (GD), Thr102, 104 to 107 (NVST), 122 to 130 (KHGNRSVSS), and Ser134. Residue Gly94 coordinates anthranilate. Position 106 (Ser106) interacts with Mg(2+). Asn125 serves as a coordination point for anthranilate. Arg180 contributes to the anthranilate binding site. Residues Asp239 and Glu240 each contribute to the Mg(2+) site.

This sequence belongs to the anthranilate phosphoribosyltransferase family. As to quaternary structure, homodimer. The cofactor is Mg(2+).

The catalysed reaction is N-(5-phospho-beta-D-ribosyl)anthranilate + diphosphate = 5-phospho-alpha-D-ribose 1-diphosphate + anthranilate. It functions in the pathway amino-acid biosynthesis; L-tryptophan biosynthesis; L-tryptophan from chorismate: step 2/5. Functionally, catalyzes the transfer of the phosphoribosyl group of 5-phosphorylribose-1-pyrophosphate (PRPP) to anthranilate to yield N-(5'-phosphoribosyl)-anthranilate (PRA). The chain is Anthranilate phosphoribosyltransferase from Pelobacter propionicus (strain DSM 2379 / NBRC 103807 / OttBd1).